A 129-amino-acid polypeptide reads, in one-letter code: Small ribosomal subunit protein uS11 (129 aa).

Belongs to the universal ribosomal protein uS11 family. Part of the 30S ribosomal subunit. Interacts with proteins S7 and S18. Binds to IF-3.

Located on the platform of the 30S subunit, it bridges several disparate RNA helices of the 16S rRNA. Forms part of the Shine-Dalgarno cleft in the 70S ribosome. The polypeptide is Small ribosomal subunit protein uS11 (Escherichia fergusonii (strain ATCC 35469 / DSM 13698 / CCUG 18766 / IAM 14443 / JCM 21226 / LMG 7866 / NBRC 102419 / NCTC 12128 / CDC 0568-73)).